Reading from the N-terminus, the 282-residue chain is Anamorsin homolog (282 aa).

Residues 5–151 (VDTNNFVLLL…EVGAKTALSL (147 aa)) are N-terminal SAM-like domain. Residues 152 to 196 (SFAPKPAQPKAETSAAQIWTLSAQDIDDEDVDLLDSDTLLDEDDL) form a linker region. 4 residues coordinate [2Fe-2S] cluster: C208, C218, C221, and C223. Residues 208-223 (CGPGSGKKKACKNCTC) are fe-S binding site A. [4Fe-4S] cluster is bound by residues C243, C246, C254, and C257. 2 short sequence motifs (cx2C motif) span residues 243–246 (CGSC) and 254–257 (CSTC). The fe-S binding site B stretch occupies residues 243–257 (CGSCYLGDAFRCSTC).

This sequence belongs to the anamorsin family. In terms of assembly, monomer. The cofactor is [2Fe-2S] cluster. It depends on [4Fe-4S] cluster as a cofactor.

Its subcellular location is the cytoplasm. The protein resides in the mitochondrion intermembrane space. In terms of biological role, component of the cytosolic iron-sulfur (Fe-S) protein assembly (CIA) machinery. Required for the maturation of extramitochondrial Fe-S proteins. Part of an electron transfer chain functioning in an early step of cytosolic Fe-S biogenesis, facilitating the de novo assembly of a [4Fe-4S] cluster on the cytosolic Fe-S scaffold complex. Electrons are transferred from NADPH via a FAD- and FMN-containing diflavin oxidoreductase. Together with the diflavin oxidoreductase, also required for the assembly of the diferric tyrosyl radical cofactor of ribonucleotide reductase (RNR), probably by providing electrons for reduction during radical cofactor maturation in the catalytic small subunit. This chain is Anamorsin homolog, found in Nematostella vectensis (Starlet sea anemone).